The chain runs to 127 residues: Large ribosomal subunit protein bL17 (127 aa).

The protein belongs to the bacterial ribosomal protein bL17 family. Part of the 50S ribosomal subunit. Contacts protein L32.

This Ligilactobacillus salivarius (strain UCC118) (Lactobacillus salivarius) protein is Large ribosomal subunit protein bL17.